The sequence spans 3351 residues: Apolipophorins (3351 aa).

The signal sequence occupies residues 1-25 (MARMKYNIALIGILASVLLTIAVNA). The region spanning 43 to 641 (YIPGNYYDYS…SQHGFLPRSS (599 aa)) is the Vitellogenin domain. N-linked (GlcNAc...) asparagine glycosylation is found at Asn-67, Asn-644, Asn-1514, Asn-1744, Asn-1932, Asn-1979, and Asn-2822. Residues 2786-2952 (LRGHVVDGKH…DYGVGKCTAI (167 aa)) form the VWFD domain.

Interacts with Nrx-1 (via cytoplasmic domain); the interaction supports apolpp/ApoLI protein stability. May be modified covalently by lipidation. Post-translationally, cleaved into 2 chains by furin protease. However, prevention of cleavage does not impair its function. As to expression, during stage 12, it is highly present throughout the yolk sac. By late stage 14, it localizes in the lateral fat body cells. Starting at stage 14, it localizes to the apodemes. Component of hemolymph clots (at protein level). Expressed in the amniosera. Expressed in rhabdomere of photoreceptor cells in retina (at protein level). In terms of tissue distribution, expressed in rhabdomere of photoreceptor cells in retina (at protein level). Expressed in simper cells as well as interphotoreceptor matrix (at protein level).

Its subcellular location is the secreted. It localises to the cell projection. It is found in the rhabdomere. In terms of biological role, constitutes the major component of lipophorin, which mediates transport for various types of lipids in hemolymph. Acts by forming lipoprotein particles that bind lipoproteins and lipids. Also involved in the transport of hydrophobic ligands like juvenile hormones, pheromone hydrocarbons and carotenoids. Required for morphogens wingless (wg) and hedgehog (hh) function, probably by acting as vehicles for the movement of wg and hh, explaining how covalently lipidated wg and hh can spread over long distances. May also be involved in transport and/or metabolism of heme. Involved in yolk granule formation. May be a component of yolk incorporated into yolk granules via yl/yolkless-mediated endocytosis and the endolysosomal pathway. This Drosophila melanogaster (Fruit fly) protein is Apolipophorins.